We begin with the raw amino-acid sequence, 208 residues long: MAKVLYITAHPFNELVSNSMAAGKAFIETYQQQHPDDEVKHIDLFETYIPVIDKDVLTGWGKMSNGETLTDDEQMKVSRLSDILEEFLSADKYVFVTPMWNLSFPPVVKAYIDAISIAGKTFKYSAEGPQGLLTDKKVLHIQSRGGYYTEGPAADFEMGDRYLRTIMTFLGVPSYETIIIEGHNAEPHKTEEIKATSINNAEKLATTF.

FMN-binding positions include 17–19 (SNS), 99–102 (MWNL), and 143–146 (SRGG).

It belongs to the azoreductase type 1 family. As to quaternary structure, homodimer. The cofactor is FMN.

It catalyses the reaction 2 a quinone + NADH + H(+) = 2 a 1,4-benzosemiquinone + NAD(+). The enzyme catalyses N,N-dimethyl-1,4-phenylenediamine + anthranilate + 2 NAD(+) = 2-(4-dimethylaminophenyl)diazenylbenzoate + 2 NADH + 2 H(+). Functionally, quinone reductase that provides resistance to thiol-specific stress caused by electrophilic quinones. Also exhibits azoreductase activity. Catalyzes the reductive cleavage of the azo bond in aromatic azo compounds to the corresponding amines. In Staphylococcus aureus (strain COL), this protein is FMN-dependent NADH:quinone oxidoreductase.